We begin with the raw amino-acid sequence, 210 residues long: Silenced mating-type protein ALPHA2 (210 aa).

Methionine 1 bears the N-acetylmethionine mark. An N-terminal domain region spans residues 1–102; the sequence is MNKIPIKDLL…RSIENDRSNY (102 aa). Positions 103–128 are flexible linker; it reads QLTQKNKSADGLVFNVVTQDMINKST. Positions 129-191 form a DNA-binding region, homeobox; TALE-type; sequence KPYRGHRFTK…NRRRKEKTIT (63 aa). The C-terminal tail stretch occupies residues 190–210; it reads ITIAPELADLLSGEPLAKKKE.

Belongs to the TALE/M-ATYP homeobox family.

It localises to the nucleus. Functionally, mating type proteins are sequence specific DNA-binding proteins that act as master switches in yeast differentiation by controlling gene expression in a cell type-specific fashion. Silenced copy of ALPHA2 at HML. The polypeptide is Silenced mating-type protein ALPHA2 (HMLALPHA2) (Saccharomyces cerevisiae (strain ATCC 204508 / S288c) (Baker's yeast)).